A 315-amino-acid chain; its full sequence is Long form salivary protein D7L2 (315 aa).

Residues 1-18 form the signal peptide; sequence MIVAPVVLSIFLQLFVQA. Cystine bridges form between Cys37–Cys73, Cys69–Cys128, Cys178–Cys211, and Cys252–Cys263.

This sequence belongs to the PBP/GOBP family. In terms of assembly, interacts with host coagulation factor XII/F12 (inactive and activated). Interacts with host coagulation factor XI/F11 (inactive).

The protein resides in the secreted. Functionally, modulates blood feeding of female mosquitoes on vertebrate species by binding and sequestering different mediators involved in the host response. Binds leukotriene B4 and leukotriene D4. Exhibits anticoagulant activity targeting the intrinsic coagulation pathway; binds coagulation factors XII and XI, preventing generation of activated FXIIa and FXIa. This is Long form salivary protein D7L2 from Anopheles gambiae (African malaria mosquito).